Reading from the N-terminus, the 246-residue chain is Type III pantothenate kinase (246 aa).

11–18 provides a ligand contact to ATP; it reads DIGNSFIK. Substrate contacts are provided by residues Y95 and 102–105; that span reads GVDR. D104 acts as the Proton acceptor in catalysis. D125 contacts K(+). Residue T128 coordinates ATP. T179 lines the substrate pocket.

It belongs to the type III pantothenate kinase family. In terms of assembly, homodimer. The cofactor is NH4(+). It depends on K(+) as a cofactor.

Its subcellular location is the cytoplasm. It catalyses the reaction (R)-pantothenate + ATP = (R)-4'-phosphopantothenate + ADP + H(+). It functions in the pathway cofactor biosynthesis; coenzyme A biosynthesis; CoA from (R)-pantothenate: step 1/5. Catalyzes the phosphorylation of pantothenate (Pan), the first step in CoA biosynthesis. This Pseudoalteromonas atlantica (strain T6c / ATCC BAA-1087) protein is Type III pantothenate kinase.